A 457-amino-acid chain; its full sequence is Gamma-aminobutyric acid receptor subunit gamma-4 (457 aa).

The first 21 residues, 1–21, serve as a signal peptide directing secretion; sequence MPAMVLLLCLALGPALRSARC. The Extracellular portion of the chain corresponds to 22 to 256; it reads ESTEEYDYDY…VSFDLSRRMG (235 aa). Residues N35 and N112 are each glycosylated (N-linked (GlcNAc...) asparagine). C173 and C187 are disulfide-bonded. The N-linked (GlcNAc...) asparagine glycan is linked to N230. The next 3 membrane-spanning stretches (helical) occupy residues 257-279, 283-305, and 317-339; these read YFAIQTYIPCILTVVLSWVSFWI, STPARTSLGITTVLTMTTLSTIS, and AMDLFVSVCFIFVFAALMEYATL. Residues 340–433 are Cytoplasmic-facing; the sequence is NYLVGNKKPL…VRIHISRLDS (94 aa). A helical membrane pass occupies residues 434-457; the sequence is YSRVFFPTAFLLFNIVYWIAYLYL.

This sequence belongs to the ligand-gated ion channel (TC 1.A.9) family. Gamma-aminobutyric acid receptor (TC 1.A.9.5) subfamily. GABRG4 sub-subfamily. In terms of assembly, generally pentameric. There are five types of GABA(A) receptor chains: alpha, beta, gamma, delta, and rho. In terms of tissue distribution, abundant in several brain regions, including the ectostriatum, nucleus rotundus and hyperstriatum ventrale.

Its subcellular location is the postsynaptic cell membrane. The protein resides in the cell membrane. Its function is as follows. GABA, the major inhibitory neurotransmitter in the vertebrate brain, mediates neuronal inhibition by binding to the GABA/benzodiazepine receptor and opening an integral chloride channel. The protein is Gamma-aminobutyric acid receptor subunit gamma-4 (GABRG4) of Gallus gallus (Chicken).